Consider the following 90-residue polypeptide: MRTMFTPITIYTQPGCRPCHRIQQFLDDAGVEYDVVDLTRNAEAKTYVQDVLKASSVPVIVTDHFEPIIGYQPDKVDELIDYYTASETGL.

The 90-residue stretch at Met1 to Leu90 folds into the Glutaredoxin domain. Cys16 and Cys19 are joined by a disulfide.

This is Gene 56 protein (56) from Mycobacterium phage D29 (Mycobacteriophage D29).